Consider the following 71-residue polypeptide: EAGEECDCGAPANPCCDAATCKLRPGAQCAEGDCCEQCRFVKEGTVCREAKGDWNDDSCTGQSADCPRNGF.

Residues 1-71 (EAGEECDCGA…QSADCPRNGF (71 aa)) form the Disintegrin domain. 6 disulfide bridges follow: C6/C21, C8/C16, C15/C38, C29/C35, C34/C59, and C47/C66. The Cell attachment site; atypical (KGD) signature appears at 51 to 53 (KGD).

This sequence belongs to the venom metalloproteinase (M12B) family. P-II subfamily. P-IId sub-subfamily. Homodimer. Expressed by the venom gland.

The protein localises to the secreted. Its function is as follows. Suppress platelet aggregation induced by ADP, collagen, thrombin, and epinephrine (IC(50)=170-330 nM). Also dose-dependently inhibits the adhesion of human melanoma cells to fibrinogen but not to fibronectin. This chain is Disintegrin ussuristatin-2, found in Gloydius ussuriensis (Ussuri mamushi).